A 186-amino-acid polypeptide reads, in one-letter code: Ribosome-recycling factor (186 aa).

The protein belongs to the RRF family.

The protein resides in the cytoplasm. In terms of biological role, responsible for the release of ribosomes from messenger RNA at the termination of protein biosynthesis. May increase the efficiency of translation by recycling ribosomes from one round of translation to another. This is Ribosome-recycling factor from Beijerinckia indica subsp. indica (strain ATCC 9039 / DSM 1715 / NCIMB 8712).